The primary structure comprises 168 residues: Phosphopantetheine adenylyltransferase (168 aa).

Position 9 (Thr-9) interacts with substrate. ATP is bound by residues 9-10 and His-17; that span reads TF. Substrate contacts are provided by Lys-41, Leu-73, and Arg-87. ATP-binding positions include 88-90, Glu-98, and 123-129; these read GLR and YQFISGT.

It belongs to the bacterial CoaD family. As to quaternary structure, homohexamer. Mg(2+) serves as cofactor.

It localises to the cytoplasm. It catalyses the reaction (R)-4'-phosphopantetheine + ATP + H(+) = 3'-dephospho-CoA + diphosphate. The protein operates within cofactor biosynthesis; coenzyme A biosynthesis; CoA from (R)-pantothenate: step 4/5. In terms of biological role, reversibly transfers an adenylyl group from ATP to 4'-phosphopantetheine, yielding dephospho-CoA (dPCoA) and pyrophosphate. The polypeptide is Phosphopantetheine adenylyltransferase (Paraburkholderia phymatum (strain DSM 17167 / CIP 108236 / LMG 21445 / STM815) (Burkholderia phymatum)).